The chain runs to 917 residues: Major intrinsically disordered Notch2-binding receptor 1 (917 aa).

At 1–892 (MEANQEASLF…AEFRRAKVCK (892 aa)) the chain is on the cytoplasmic side. 7 disordered regions span residues 337–367 (STYF…WPAK), 389–410 (SEEK…GPDR), 457–476 (DKSI…SVGT), 568–588 (ITNG…NVHH), 652–679 (SEAP…LENS), 706–727 (TRPS…IASI), and 746–783 (NEEE…LPKQ). Over residues 460-476 (ISCTSGQHSSDTSSVGT) the composition is skewed to polar residues. Basic and acidic residues predominate over residues 576-588 (KGDKCNRPENVHH). S712 is subject to Phosphoserine. A helical membrane pass occupies residues 893-913 (IAALITAAACTVILVIVVPIC). The Extracellular portion of the chain corresponds to 914-917 (TMKS).

It belongs to the MINAR family. Interacts with NOTCH2; this interaction increases MINAR1 stability. Interacts (via N-terminus) with DEPTOR (via PDZ domain); this interaction may stabilize DEPTOR protein by impairing its ubiquitination.

Its subcellular location is the cell membrane. Intrinsically disordered protein which may negatively regulate mTOR signaling pathway by stabilizing the mTOR complex component DEPTOR. Negatively regulates angiogenesis. Negatively regulates cell growth. Negatively regulates neurite outgrowth in hippocampal neurons. This chain is Major intrinsically disordered Notch2-binding receptor 1 (Minar1), found in Rattus norvegicus (Rat).